The primary structure comprises 354 residues: tRNA-specific 2-thiouridylase MnmA (354 aa).

Residues 6 to 13 and Leu33 each bind ATP; that span reads LLSGGVDS. Cys100 (nucleophile) is an active-site residue. Cysteines 100 and 195 form a disulfide. ATP is bound at residue Gly123. The interaction with tRNA stretch occupies residues 145-147; that stretch reads KDQ. The active-site Cysteine persulfide intermediate is Cys195.

Belongs to the MnmA/TRMU family.

The protein localises to the cytoplasm. The catalysed reaction is S-sulfanyl-L-cysteinyl-[protein] + uridine(34) in tRNA + AH2 + ATP = 2-thiouridine(34) in tRNA + L-cysteinyl-[protein] + A + AMP + diphosphate + H(+). Functionally, catalyzes the 2-thiolation of uridine at the wobble position (U34) of tRNA, leading to the formation of s(2)U34. The sequence is that of tRNA-specific 2-thiouridylase MnmA from Borrelia recurrentis (strain A1).